We begin with the raw amino-acid sequence, 175 residues long: Translation initiation factor IF-3 (175 aa).

It belongs to the IF-3 family. Monomer.

Its subcellular location is the cytoplasm. IF-3 binds to the 30S ribosomal subunit and shifts the equilibrium between 70S ribosomes and their 50S and 30S subunits in favor of the free subunits, thus enhancing the availability of 30S subunits on which protein synthesis initiation begins. The polypeptide is Translation initiation factor IF-3 (Staphylococcus aureus (strain MRSA252)).